The sequence spans 170 residues: MVDTAKNTKLFTSYGVSTSKTVTPEIAAKLISKAKRPLLMVGTLTLDPELLDRVVKISKTANIPIAATGSSLASLADKDVDAEYINAHMLGFYLTDPNWPGLDGNGNYDTVIVLGFKKFYINQVLSAAKNFSNLKTIAIERGYIQNATMSFGNLSKADHYAALDELIDLL.

The protein belongs to the CdhB family. In terms of assembly, heterotetramer of two alpha and two epsilon subunits. The ACDS complex is made up of alpha, epsilon, beta, gamma and delta subunits with a probable stoichiometry of (alpha(2)epsilon(2))(4)-beta(8)-(gamma(1)delta(1))(8).

The protein operates within one-carbon metabolism; methanogenesis from acetate. Its function is as follows. Part of a complex that catalyzes the reversible cleavage of acetyl-CoA, allowing growth on acetate as sole source of carbon and energy. The alpha-epsilon subcomponent functions as a carbon monoxide dehydrogenase. The precise role of the epsilon subunit is unclear; it may have a stabilizing role within the alpha(2)epsilon(2) component and/or be involved in electron transfer to FAD during a potential FAD-mediated CO oxidation. This is Acetyl-CoA decarbonylase/synthase complex subunit epsilon 1 (cdhB1) from Methanosarcina acetivorans (strain ATCC 35395 / DSM 2834 / JCM 12185 / C2A).